We begin with the raw amino-acid sequence, 268 residues long: TodF product hydratase (268 aa).

This sequence belongs to the hydratase/decarboxylase family.

It participates in xenobiotic degradation; toluene degradation. Its function is as follows. Converts the product of 2-hydroxy-6-oxo-2,4-heptadienoate hydrolase. The polypeptide is TodF product hydratase (todJ) (Pseudomonas putida (strain ATCC 700007 / DSM 6899 / JCM 31910 / BCRC 17059 / LMG 24140 / F1)).